The chain runs to 229 residues: Cytidylate kinase (229 aa).

10–18 (GHSSSGKST) contacts ATP.

Belongs to the cytidylate kinase family. Type 1 subfamily.

It localises to the cytoplasm. The catalysed reaction is CMP + ATP = CDP + ADP. It carries out the reaction dCMP + ATP = dCDP + ADP. The chain is Cytidylate kinase from Parabacteroides distasonis (strain ATCC 8503 / DSM 20701 / CIP 104284 / JCM 5825 / NCTC 11152).